A 297-amino-acid polypeptide reads, in one-letter code: Phosphoribosylaminoimidazole-succinocarboxamide synthase (297 aa).

This sequence belongs to the SAICAR synthetase family.

The catalysed reaction is 5-amino-1-(5-phospho-D-ribosyl)imidazole-4-carboxylate + L-aspartate + ATP = (2S)-2-[5-amino-1-(5-phospho-beta-D-ribosyl)imidazole-4-carboxamido]succinate + ADP + phosphate + 2 H(+). It participates in purine metabolism; IMP biosynthesis via de novo pathway; 5-amino-1-(5-phospho-D-ribosyl)imidazole-4-carboxamide from 5-amino-1-(5-phospho-D-ribosyl)imidazole-4-carboxylate: step 1/2. This is Phosphoribosylaminoimidazole-succinocarboxamide synthase from Corynebacterium glutamicum (strain R).